The following is a 232-amino-acid chain: Ribose-5-phosphate isomerase A (232 aa).

Substrate-binding positions include 28-31 (TGST), 83-86 (DGAD), and 96-99 (KGGG). The Proton acceptor role is filled by glutamate 105. Lysine 123 lines the substrate pocket.

The protein belongs to the ribose 5-phosphate isomerase family. Homodimer.

The enzyme catalyses aldehydo-D-ribose 5-phosphate = D-ribulose 5-phosphate. It participates in carbohydrate degradation; pentose phosphate pathway; D-ribose 5-phosphate from D-ribulose 5-phosphate (non-oxidative stage): step 1/1. Functionally, catalyzes the reversible conversion of ribose-5-phosphate to ribulose 5-phosphate. The polypeptide is Ribose-5-phosphate isomerase A (Rhodopseudomonas palustris (strain ATCC BAA-98 / CGA009)).